The chain runs to 461 residues: NADH-ubiquinone oxidoreductase chain 4 (461 aa).

13 helical membrane passes run 20–42, 61–81, 93–113, 114–134, 147–167, 197–217, 225–245, 258–278, 285–304, 309–331, 351–371, 393–413, and 436–456; these read PAWL…LTWL, PLST…ILAS, QRSF…AFGA, TEII…LIII, GTYF…ALLM, WTAC…HLWL, PIAG…YGMM, LAYP…SICL, SLIA…GILT, GFTG…FCLA, VILP…LALP, TLTM…HMFL, and LLMT…ELIW.

The protein belongs to the complex I subunit 4 family.

It localises to the mitochondrion membrane. The enzyme catalyses a ubiquinone + NADH + 5 H(+)(in) = a ubiquinol + NAD(+) + 4 H(+)(out). Core subunit of the mitochondrial membrane respiratory chain NADH dehydrogenase (Complex I) that is believed to belong to the minimal assembly required for catalysis. Complex I functions in the transfer of electrons from NADH to the respiratory chain. The immediate electron acceptor for the enzyme is believed to be ubiquinone. The protein is NADH-ubiquinone oxidoreductase chain 4 (MT-ND4) of Latimeria chalumnae (Coelacanth).